The chain runs to 317 residues: U5 small nuclear ribonucleoprotein TSSC4 (317 aa).

Residues 1–19 (MAETEAGLEVEEPTEDDTL) show a composition bias toward acidic residues. Residues 1 to 78 (MAETEAGLEV…IPTTAVQPFH (78 aa)) form a disordered region. The segment covering 20 to 37 (PSDTVSLSDSDSDLSLPS) has biased composition (low complexity). A phosphoserine mark is found at Ser57, Ser64, Ser83, and Ser92. The segment at 74–101 (VQPFHLRGMSSTFSQRSHSIFDCLESAA) is hom2; mediates interaction with the U5 snRNP complexes and required for spliceosomal tri-snRNP complex assembly. Residues 123–151 (VAPPSQTPARSLSRVHGNTDPTRVHPVPD) form a disordered region. The interval 146-300 (VHPVPDYVSH…SKKRSRDHFR (155 aa)) is interaction with SNRNP200. A hom3; mediates interaction with the U5 snRNP complexes region spans residues 147–183 (HPVPDYVSHPERWTKYSLEDVSETSEQSNRDAALAFL). A hom4; necessary for interaction with the PRPF19 complex and required for spliceosomal tri-snRNP complex assembly region spans residues 198–238 (FNQDPSSCGEGRVVFTKPVRGSEARAERKRVLKKGVVSGAG). Lys214 carries the N6-acetyllysine modification. The tract at residues 247–317 (HLAGPEAEEW…GPGSERGPSV (71 aa)) is disordered.

Belongs to the TSSC4 family. In terms of assembly, interacts in a RNA-independent manner with distinct U5 snRNP-containing complexes, the mono-U5 snRNP and the post-splicing U5 snRNP-PRPF19 complex. Interacts with SNRNP200; the interaction is direct, excludes recruitment of C9ORF78 and WBP4 to SNRNP200 and negatively regulates its RNA helicase activity. Interacts with PRPF8; the interaction is direct.

It is found in the nucleus. The protein localises to the cytoplasm. Its function is as follows. Protein associated with the U5 snRNP, during its maturation and its post-splicing recycling and which is required for spliceosomal tri-snRNP complex assembly in the nucleus. Has a molecular sequestering activity and transiently hinders SNRNP200 binding sites for constitutive splicing factors that intervene later during the assembly of the spliceosome and splicing. Together with its molecular sequestering activity, may also function as a molecular adapter and placeholder, coordinating the assembly of the U5 snRNP and its association with the U4/U6 di-snRNP. This chain is U5 small nuclear ribonucleoprotein TSSC4, found in Rattus norvegicus (Rat).